Consider the following 735-residue polypeptide: Urea active transporter (735 aa).

Residues 1-14 are Cytoplasmic-facing; the sequence is MGEFKPPLPQGAGY. Residues 15–35 traverse the membrane as a helical segment; it reads AIVLGLGAVFAGMMVLTTYLL. The Extracellular segment spans residues 36–85; the sequence is KRYQKEIITAEEFTTAGRSVKTGLVAAAVVSSWIWCSTLLTSSTKEYADG. A helical transmembrane segment spans residues 86-106; sequence IFGGYAYAAGACFQIIAFAIL. The Cytoplasmic segment spans residues 107–130; that stretch reads AIKTKQMAPNAHTYLELVRTRYGK. Residues 131–151 traverse the membrane as a helical segment; that stretch reads IGHGCYLFYAIATNILVTSML. The Extracellular portion of the chain corresponds to 152–166; it reads LTSGSAVFSDLTGMN. Residues 167 to 187 traverse the membrane as a helical segment; sequence TIASCFLLPVGVVVYTLFGGI. The Cytoplasmic portion of the chain corresponds to 188–189; it reads KA. A helical membrane pass occupies residues 190 to 210; that stretch reads TFLTDYMHTCVIIIIVLVFAF. Topologically, residues 211-253 are extracellular; that stretch reads KVYATSDVLGSPGKVYDLVREAAKRHPVDGNYQGEYMTMTSKS. Residues 254 to 274 traverse the membrane as a helical segment; it reads AGILLIINLIGNFGTVFLDNG. Residues 275-295 are Cytoplasmic-facing; that stretch reads YWNKAISASPAASLKAYAIGG. A helical membrane pass occupies residues 296 to 316; that stretch reads LAWFAVPSLISLTMGLACLAV. At 317–343 the chain is on the extracellular side; it reads ETSPNFPTYPDPLTSFQANSGLVLPAA. A helical transmembrane segment spans residues 344–364; it reads AIAIMGKGGAVASLLMIFMAV. The Cytoplasmic segment spans residues 365–403; sequence TSAMSAELIAVSSVFTYDIYREYIDPRASGKKLIYTSHV. A helical transmembrane segment spans residues 404 to 424; it reads ACIFFGLAMSGFSVGLYYGGI. Position 425 (serine 425) is a topological domain, extracellular. Residues 426–446 traverse the membrane as a helical segment; sequence MGYIYEMMGIIISSAVLPVVL. At 447–454 the chain is on the cytoplasmic side; that stretch reads TLCSKDMN. Residues 455 to 475 form a helical membrane-spanning segment; it reads LVAAVVSPILGTGLAIMSWLV. At 476–496 the chain is on the extracellular side; that stretch reads CTKSLYKELTVDTTFMDYPML. Residues 497–517 traverse the membrane as a helical segment; it reads TGNLVALLSPAIFIPILTYVF. Residues 518–618 lie on the Cytoplasmic side of the membrane; it reads KPQNFDWEKM…EQRELARGLK (101 aa). The interval 553–572 is disordered; that stretch reads ANDKEQEEETNSLVSDSEKN. A helical transmembrane segment spans residues 619–639; the sequence is IAYFLCVFFALAFLVVWPMPM. At 640–650 the chain is on the extracellular side; that stretch reads YGSKYIFSKKF. The helical transmembrane segment at 651–671 threads the bilayer; the sequence is FTGWVVVMIIWLFFSAFAVCI. The Cytoplasmic portion of the chain corresponds to 672-735; that stretch reads YPLWEGRHGI…SHFGQVDEII (64 aa).

This sequence belongs to the sodium:solute symporter (SSF) (TC 2.A.21) family. As to quaternary structure, may polymerize.

It is found in the membrane. In terms of biological role, required for active transport of urea. The polypeptide is Urea active transporter (DUR3) (Saccharomyces cerevisiae (strain ATCC 204508 / S288c) (Baker's yeast)).